The chain runs to 345 residues: Aspartate--ammonia ligase (345 aa).

It belongs to the class-II aminoacyl-tRNA synthetase family. AsnA subfamily.

Its subcellular location is the cytoplasm. The catalysed reaction is L-aspartate + NH4(+) + ATP = L-asparagine + AMP + diphosphate + H(+). The protein operates within amino-acid biosynthesis; L-asparagine biosynthesis; L-asparagine from L-aspartate (ammonia route): step 1/1. The sequence is that of Aspartate--ammonia ligase from Bacteroides fragilis (strain ATCC 25285 / DSM 2151 / CCUG 4856 / JCM 11019 / LMG 10263 / NCTC 9343 / Onslow / VPI 2553 / EN-2).